Reading from the N-terminus, the 305-residue chain is Homoserine kinase (305 aa).

93-103 (PLSRGLGSSAT) contacts ATP.

Belongs to the GHMP kinase family. Homoserine kinase subfamily.

Its subcellular location is the cytoplasm. It catalyses the reaction L-homoserine + ATP = O-phospho-L-homoserine + ADP + H(+). Its pathway is amino-acid biosynthesis; L-threonine biosynthesis; L-threonine from L-aspartate: step 4/5. In terms of biological role, catalyzes the ATP-dependent phosphorylation of L-homoserine to L-homoserine phosphate. This chain is Homoserine kinase, found in Picosynechococcus sp. (strain ATCC 27264 / PCC 7002 / PR-6) (Agmenellum quadruplicatum).